The primary structure comprises 142 residues: Hemoglobin subunit zeta (142 aa).

At serine 2 the chain carries N-acetylserine. The 141-residue stretch at 2 to 142 (SLTKAERTMV…VSSVLTEKYR (141 aa)) folds into the Globin domain. The residue at position 53 (serine 53) is a Phosphoserine. Histidine 59 contributes to the heme b binding site. Residue serine 73 is modified to Phosphoserine. Histidine 88 lines the heme b pocket.

The protein belongs to the globin family. As to quaternary structure, heterotetramer of two zeta chains and beta-type chains.

Functionally, the zeta chain is an alpha-type chain of mammalian embryonic hemoglobin. This is Hemoglobin subunit zeta (HBZ1) from Equus caballus (Horse).